The primary structure comprises 185 residues: MINEIRKDAEIRMEKCVDAFKSHISKVRTGRASPSLLDGIQIDYYGLLTPLRQLANIIAEDSRTLAITVFDRTLAPAVEKAIMASDLGLNPSSAGTVIRVPLPPLTEERRRDLIKVVRAEAEQGRVSVRNVRRDANDKVKALLKDKTIGEDEDRRSQDEIQKLTDAWIKKLDSALAEKEAELMEI.

It belongs to the RRF family.

Its subcellular location is the cytoplasm. Responsible for the release of ribosomes from messenger RNA at the termination of protein biosynthesis. May increase the efficiency of translation by recycling ribosomes from one round of translation to another. The chain is Ribosome-recycling factor from Sodalis glossinidius (strain morsitans).